A 356-amino-acid chain; its full sequence is UDP-N-acetylglucosamine--N-acetylmuramyl-(pentapeptide) pyrophosphoryl-undecaprenol N-acetylglucosamine transferase (356 aa).

Residues 10–12 (TAG), asparagine 123, arginine 159, serine 193, isoleucine 240, and glutamine 284 each bind UDP-N-acetyl-alpha-D-glucosamine.

This sequence belongs to the glycosyltransferase 28 family. MurG subfamily.

The protein localises to the cell membrane. The catalysed reaction is di-trans,octa-cis-undecaprenyl diphospho-N-acetyl-alpha-D-muramoyl-L-alanyl-D-glutamyl-meso-2,6-diaminopimeloyl-D-alanyl-D-alanine + UDP-N-acetyl-alpha-D-glucosamine = di-trans,octa-cis-undecaprenyl diphospho-[N-acetyl-alpha-D-glucosaminyl-(1-&gt;4)]-N-acetyl-alpha-D-muramoyl-L-alanyl-D-glutamyl-meso-2,6-diaminopimeloyl-D-alanyl-D-alanine + UDP + H(+). Its pathway is cell wall biogenesis; peptidoglycan biosynthesis. Cell wall formation. Catalyzes the transfer of a GlcNAc subunit on undecaprenyl-pyrophosphoryl-MurNAc-pentapeptide (lipid intermediate I) to form undecaprenyl-pyrophosphoryl-MurNAc-(pentapeptide)GlcNAc (lipid intermediate II). This is UDP-N-acetylglucosamine--N-acetylmuramyl-(pentapeptide) pyrophosphoryl-undecaprenol N-acetylglucosamine transferase from Corynebacterium glutamicum (strain R).